The chain runs to 115 residues: Large ribosomal subunit protein bL19 (115 aa).

Belongs to the bacterial ribosomal protein bL19 family.

Its function is as follows. This protein is located at the 30S-50S ribosomal subunit interface and may play a role in the structure and function of the aminoacyl-tRNA binding site. The sequence is that of Large ribosomal subunit protein bL19 from Streptococcus pyogenes serotype M1.